The following is a 397-amino-acid chain: UDP-GlcNAc:betaGal beta-1,3-N-acetylglucosaminyltransferase 8 (397 aa).

Over 1–6 the chain is Cytoplasmic; the sequence is MRCPKC. A helical; Signal-anchor for type II membrane protein membrane pass occupies residues 7–23; it reads LLCLSALLTLLGLKVYI. Over 24-397 the chain is Lumenal; the sequence is EWTSESRLSK…KQLQDPRLQC (374 aa). The disordered stretch occupies residues 33 to 58; sequence KAYPSPRGTPPSPTPANPEPTLPANL. The span at 39–53 shows a compositional bias: pro residues; sequence RGTPPSPTPANPEPT. Asparagine 57 is a glycosylation site (N-linked (GlcNAc...) asparagine).

It belongs to the glycosyltransferase 31 family. As to quaternary structure, interacts with B3GNT2; this interaction greatly increases B3GNT2 catalytic activity, independently of B3GNT8 enzymatic activity. Highly expressed in small intestine, pancreas, spleen, bone marrow, lung, throat, and ileum, and weakly in fetal brain, cerebellum, heart, liver, tongue, breast, uteri, and testis. Not detected in colon. Differentially expressed in human tumor cell lines.

The protein localises to the golgi apparatus membrane. It participates in protein modification; protein glycosylation. In terms of biological role, beta-1,3-N-acetylglucosaminyltransferase that plays a role in the elongation of specific branch structures of multiantennary N-glycans. Has strong activity towards tetraantennary N-glycans and 2,6 triantennary glycans. The sequence is that of UDP-GlcNAc:betaGal beta-1,3-N-acetylglucosaminyltransferase 8 from Homo sapiens (Human).